The primary structure comprises 353 residues: Photosystem II D2 protein (353 aa).

At threonine 2 the chain carries N-acetylthreonine. The residue at position 2 (threonine 2) is a Phosphothreonine. A helical membrane pass occupies residues 41–61 (CAYFALGGWFTGTTFVTSWYT). Residue histidine 118 participates in chlorophyll a binding. Residues 125–141 (GFMLRQFELARSVQLRP) form a helical membrane-spanning segment. Pheophytin a is bound by residues glutamine 130 and asparagine 143. A helical transmembrane segment spans residues 153 to 166 (VFVSVFLIYPLGQS). Chlorophyll a is bound at residue histidine 198. The helical transmembrane segment at 208-228 (AALLCAIHGATVENTLFEDGD) threads the bilayer. A plastoquinone-binding residues include histidine 215 and phenylalanine 262. Residue histidine 215 coordinates Fe cation. A Fe cation-binding site is contributed by histidine 269. A helical membrane pass occupies residues 279-295 (GLWMSALGVVGLALNLR).

This sequence belongs to the reaction center PufL/M/PsbA/D family. PSII is composed of 1 copy each of membrane proteins PsbA, PsbB, PsbC, PsbD, PsbE, PsbF, PsbH, PsbI, PsbJ, PsbK, PsbL, PsbM, PsbT, PsbX, PsbY, PsbZ, Psb30/Ycf12, at least 3 peripheral proteins of the oxygen-evolving complex and a large number of cofactors. It forms dimeric complexes. It depends on The D1/D2 heterodimer binds P680, chlorophylls that are the primary electron donor of PSII, and subsequent electron acceptors. It shares a non-heme iron and each subunit binds pheophytin, quinone, additional chlorophylls, carotenoids and lipids. There is also a Cl(-1) ion associated with D1 and D2, which is required for oxygen evolution. The PSII complex binds additional chlorophylls, carotenoids and specific lipids. as a cofactor.

The protein resides in the plastid. It localises to the chloroplast thylakoid membrane. The enzyme catalyses 2 a plastoquinone + 4 hnu + 2 H2O = 2 a plastoquinol + O2. Its function is as follows. Photosystem II (PSII) is a light-driven water:plastoquinone oxidoreductase that uses light energy to abstract electrons from H(2)O, generating O(2) and a proton gradient subsequently used for ATP formation. It consists of a core antenna complex that captures photons, and an electron transfer chain that converts photonic excitation into a charge separation. The D1/D2 (PsbA/PsbD) reaction center heterodimer binds P680, the primary electron donor of PSII as well as several subsequent electron acceptors. D2 is needed for assembly of a stable PSII complex. This Morus indica (Mulberry) protein is Photosystem II D2 protein.